Reading from the N-terminus, the 513-residue chain is Lysine--tRNA ligase (513 aa).

Residues 1–11 show a composition bias toward polar residues; the sequence is MTEPTQPNAAQ. The segment at 1 to 22 is disordered; sequence MTEPTQPNAAQPNVVPEVDDNK. Residues Glu423 and Glu430 each coordinate Mg(2+).

The protein belongs to the class-II aminoacyl-tRNA synthetase family. Homodimer. The cofactor is Mg(2+).

It localises to the cytoplasm. It carries out the reaction tRNA(Lys) + L-lysine + ATP = L-lysyl-tRNA(Lys) + AMP + diphosphate. In Paraburkholderia xenovorans (strain LB400), this protein is Lysine--tRNA ligase.